A 146-amino-acid chain; its full sequence is Prolactin-inducible protein homolog (146 aa).

The signal sequence occupies residues 1 to 28 (MRLLQLLFRASPATLLLVLCLQLGANKA). Glutamine 29 is subject to Pyrrolidone carboxylic acid. 2 cysteine pairs are disulfide-bonded: cysteine 65–cysteine 91 and cysteine 89–cysteine 123. Asparagine 105 is a glycosylation site (N-linked (GlcNAc...) asparagine).

It belongs to the PIP family. In terms of assembly, monomer. Interacts with AZGP1.

It localises to the secreted. This chain is Prolactin-inducible protein homolog (PIP), found in Symphalangus syndactylus (Siamang).